A 253-amino-acid polypeptide reads, in one-letter code: uncharacterized protein (253 aa).

Residues 62-78 form a helical membrane-spanning segment; that stretch reads WCSIGWSIGALIIFLVY. Low complexity predominate over residues 141–158; it reads TTPQTTTPEIPSSTEPQE. The disordered stretch occupies residues 141–225; that stretch reads TTPQTTTPEI…HDNQPLEERH (85 aa). The segment covering 200-216 has biased composition (acidic residues); the sequence is NVEDEPPPNKPEEEEDH.

It localises to the host membrane. This is an uncharacterized protein from Aedes vexans (Inland floodwater mosquito).